We begin with the raw amino-acid sequence, 315 residues long: tRNA-cytidine(32) 2-sulfurtransferase (315 aa).

The PP-loop motif signature appears at 39–44 (SGGKDS). Positions 114, 117, and 205 each coordinate [4Fe-4S] cluster.

This sequence belongs to the TtcA family. Homodimer. Requires Mg(2+) as cofactor. The cofactor is [4Fe-4S] cluster.

Its subcellular location is the cytoplasm. The catalysed reaction is cytidine(32) in tRNA + S-sulfanyl-L-cysteinyl-[cysteine desulfurase] + AH2 + ATP = 2-thiocytidine(32) in tRNA + L-cysteinyl-[cysteine desulfurase] + A + AMP + diphosphate + H(+). The protein operates within tRNA modification. Its function is as follows. Catalyzes the ATP-dependent 2-thiolation of cytidine in position 32 of tRNA, to form 2-thiocytidine (s(2)C32). The sulfur atoms are provided by the cysteine/cysteine desulfurase (IscS) system. This Ralstonia pickettii (strain 12J) protein is tRNA-cytidine(32) 2-sulfurtransferase.